The chain runs to 126 residues: Large-conductance mechanosensitive channel (126 aa).

The next 2 helical transmembrane spans lie at 8–28 (FAMRGNVIDLAVAVVLGAAFT) and 70–90 (IQQIVSFFLIAIALFLIVKVI).

Belongs to the MscL family. Homopentamer.

Its subcellular location is the cell membrane. Channel that opens in response to stretch forces in the membrane lipid bilayer. May participate in the regulation of osmotic pressure changes within the cell. This Exiguobacterium sp. (strain ATCC BAA-1283 / AT1b) protein is Large-conductance mechanosensitive channel.